The following is a 935-amino-acid chain: MAPRAASPALSENEFDITGALFQNDSESDNERSSAKSKRQPKKKIPSQDLDFLGDVNDDDGDEAFIAQQQTSANRKASNLKGRTVKKGGGFQAMGLSANLLKAIARKGFSVPTPIQRKTIPVIMDDQDVVGMARTGSGKTAAFVIPMIEKLRSHSTKVGARGLILSPSRELALQTLKVVKELGKGTDLKCVLLVGGDSLEEQFTMMAGNPDIVIATPGRFLHLKVEMNLDLYSIRYVVFDEADRLFEMGFAAQLTEILHGLPPNRQTLLFSATLPKSLVEFARAGLQEPTLIRLDTESKISPDLQNAFFSIKSSEKEGALLYILHEVIKMPTGPTEMAQQRQGEDASARFSKANKRKRAEMEKAVNTKESPTQHSTIVFAATKHHVDYLYSLLHEAGFAVSYVYGALDQTARKIQVQNFRSGLSNILVVTDVAARGIDIPILANVINYDFPSQPKIFIHRVGRTARAGRKGWSYSLVRDADAPYLLDLQLFLGRRLVVGRENGDHVNFAEDVVAGGLPRDGLSQNCEWVTKVLGDDADIAAQRTVATKGEKLYMRTRNSASLESAKRAKQVVSSDHWTSIHPLFQDESSNLEAEREKMLARIGGYRPSETIFEVNTRRIGKQESEEALNTIKRVRTTLETKKKRSKANAKSEFLEDAPEGLKTGEGEAGKNEDEAAFSDADDIDAPTGVADDMSLASDSELEVTFSSYSQSNGNKSKKASAASFQNPDYFMSYTPNNNSLAEDRAYGVHSGTNSNFAQASRSATMDLAGDEGSRGFGEPRTMMRWDKRHKKYVARQNDEDGSKGTRLVRGESGAKIASSFRSGRFDAWKRGNRVGRMPRVGEAEAPNLAAGLNAALSGKRFKHRREQAPKRADPLRGDYEKMKKKADKAKERSMSKAGGAAAGGKSELRNTDDIRIARKLKQRRQEKNARPSRKR.

The disordered stretch occupies residues 1–51 (MAPRAASPALSENEFDITGALFQNDSESDNERSSAKSKRQPKKKIPSQDLD). Residues 35–45 (AKSKRQPKKKI) show a composition bias toward basic residues. The short motif at 89 to 117 (GGFQAMGLSANLLKAIARKGFSVPTPIQR) is the Q motif element. Positions 120–292 (IPVIMDDQDV…RAGLQEPTLI (173 aa)) constitute a Helicase ATP-binding domain. 133-140 (ARTGSGKT) is an ATP binding site. The DEAD box signature appears at 240 to 243 (DEAD). Residues 360–514 (EMEKAVNTKE…HVNFAEDVVA (155 aa)) form the Helicase C-terminal domain. Disordered regions lie at residues 638-674 (LETKKKRSKANAKSEFLEDAPEGLKTGEGEAGKNEDE) and 857-935 (SGKR…SRKR). Basic and acidic residues-rich tracts occupy residues 662-673 (KTGEGEAGKNED), 866-881 (EQAPKRADPLRGDYEK), and 906-916 (SELRNTDDIRI).

This sequence belongs to the DEAD box helicase family. DDX54/DBP10 subfamily.

It is found in the nucleus. Its subcellular location is the nucleolus. It catalyses the reaction ATP + H2O = ADP + phosphate + H(+). Functionally, ATP-binding RNA helicase involved in the biogenesis of 60S ribosomal subunits and is required for the normal formation of 25S and 5.8S rRNAs. This chain is ATP-dependent RNA helicase dbp10 (dbp10), found in Aspergillus clavatus (strain ATCC 1007 / CBS 513.65 / DSM 816 / NCTC 3887 / NRRL 1 / QM 1276 / 107).